The primary structure comprises 556 residues: Polyphenol oxidase 2 (556 aa).

Residues His-57, His-81, His-90, His-250, His-254, and His-282 each coordinate Cu cation. Positions 79 to 81 (CTH) form a cross-link, 2'-(S-cysteinyl)-histidine (Cys-His). His-254 contributes to the substrate binding site. Residues 379 to 556 (SKPSSGARNT…FDDVAVHVIN (178 aa)) constitute a propeptide, removed in mature form.

Belongs to the tyrosinase family. Heterotetramer. Cu(2+) is required as a cofactor. In terms of processing, the C-ter is probably cleaved after Gly-378 since the mature active protein is smaller than the protein encoded by the gene.

The enzyme catalyses 2 L-dopa + O2 = 2 L-dopaquinone + 2 H2O. It catalyses the reaction L-tyrosine + O2 = L-dopaquinone + H2O. Its function is as follows. Copper-containing oxidase that catalyzes both the o-hydroxylation of monophenols and the subsequent oxidation of the resulting o-diphenols into reactive o-quinones, which evolve spontaneously to produce intermediates, which associate in dark brown pigments. Involved in the initial step of melanin synthesis. Melanins constitute a mechanism of defense and resistance to stress such as UV radiations, free radicals, gamma rays, dehydratation and extreme temperatures, and contribute to the fungal cell-wall resistance against hydrolytic enzymes in avoiding cellular lysis. Fungal pigments are also involved in the formation and stability of spores. The protein is Polyphenol oxidase 2 (PPO2) of Agaricus bisporus (White button mushroom).